The primary structure comprises 135 residues: Early E3 15.3 kDa protein (135 aa).

It belongs to the adenoviridae E3_15 family.

Functionally, protects virus-infected cells from TNF-induced cytolysis. This Human adenovirus B serotype 7 (HAdV-7) protein is Early E3 15.3 kDa protein.